The sequence spans 481 residues: Ammonium transporter 2 member 3 (481 aa).

The Extracellular portion of the chain corresponds to 1 to 36 (MNFNSSKYISHLPESLLPNDASPEWNNKADNAWQLT). An N-linked (GlcNAc...) asparagine glycan is attached at N4. The chain crosses the membrane as a helical span at residues 37–57 (AATLVGLQTVPGLVILYGSMV). The Cytoplasmic segment spans residues 58 to 62 (KKKWA). A helical membrane pass occupies residues 63-83 (VNSAFMALYAFAAVLVCWVLW). At 84–123 (AHHMAFGTKLLPFVGKPNFALSQKFLLSKASTNYYLPMAD) the chain is on the extracellular side. Residues 124 to 144 (FVFYQFAFAAITLVLLGGSLL) traverse the membrane as a helical segment. The Cytoplasmic segment spans residues 145 to 151 (GRMNFYA). Residues 152-172 (WMLFVPLWLTLSYTVGAFTIW) traverse the membrane as a helical segment. The Extracellular segment spans residues 173-184 (GNGFLEGKIIDY). Residues 185 to 205 (AGGFVIHLSSGVAGFTAAYWV) form a helical membrane-spanning segment. Over 206–220 (GPRTSNDRQNFPPNN) the chain is Cytoplasmic. Residues 221-241 (IIHMLGGAGFLWMGWTGFNGG) form a helical membrane-spanning segment. Residues 242–248 (APFQVGE) are Extracellular-facing. Residues 249-269 (ITSLAIFNTHLCTATSILVWI) traverse the membrane as a helical segment. Over 270–281 (SLDMAVYKKGSL) the chain is Cytoplasmic. A helical transmembrane segment spans residues 282–302 (IGSVQGMMTGLVCITPGAGLV). Residues 303 to 304 (DP) lie on the Extracellular side of the membrane. A helical transmembrane segment spans residues 305 to 325 (WAAILMGALSGSIPWYTMMVL). Topologically, residues 326–338 (HKKSPFFQSVDDT) are cytoplasmic. The chain crosses the membrane as a helical span at residues 339–359 (LGVFHTHAVAGILGGILSGVF). The Extracellular segment spans residues 360–363 (AKPK). Residues 364 to 381 (LLRILYGPYGSGLLYSYF) form a helical membrane-spanning segment. Residues 382–395 (DDNIGQGIKQMWYQ) lie on the Cytoplasmic side of the membrane. A helical transmembrane segment spans residues 396–416 (LLGAVFITIWNVVITSLICIL). At 417–481 (LNRFVNLRMQ…HSFPINKIDE (65 aa)) the chain is on the extracellular side.

The protein belongs to the ammonia transporter channel (TC 1.A.11.2) family. In terms of tissue distribution, mostly expressed in mycorrhizal roots. Also observed in the cortex and endodermis of non-mycorrhizal roots.

The protein resides in the cell membrane. In terms of biological role, involved in ammonium transport. Required for arbuscular mycorrhizal (AM) symbiosis with AM fungi (e.g. Glomus versiforme and G.intraradices) in low nitrogen conditions. This chain is Ammonium transporter 2 member 3, found in Medicago truncatula (Barrel medic).